A 97-amino-acid polypeptide reads, in one-letter code: Late transcription unit B protein (97 aa).

Residues 24 to 45 (SIEGETKKEHKHHYSTASKEKE) are disordered.

In Chlamydia trachomatis serovar D (strain ATCC VR-885 / DSM 19411 / UW-3/Cx), this protein is Late transcription unit B protein (ltuB).